Consider the following 1039-residue polypeptide: RNA-binding protein Unr (1039 aa).

Positions 49 to 62 (TTLGLQPQGQGPSP) are enriched in polar residues. Disordered stretches follow at residues 49–126 (TTLG…QQQH) and 165–184 (SIFG…PSQT). Composition is skewed to low complexity over residues 63-80 (QQQQ…QHQQ), 89-126 (QQHM…QQQH), and 165-182 (SIFG…ADPS). Residues 186–250 (RETGIIEKLL…GKPIASQVSK (65 aa)) enclose the CSD 1 domain. The 77-residue stretch at 261–337 (RVTGTVTTEL…GNLGACHIRL (77 aa)) folds into the CSD 2; degenerate domain. The 69-residue stretch at 345-413 (KYRGVVCSMK…GREFACNITR (69 aa)) folds into the CSD 3 domain. Residues 428-503 (VYKGQVLKSL…RDQLQRATSI (76 aa)) form the CSD 4; degenerate domain. The CSD 5 domain occupies 517 to 585 (REQGTIASLK…SRLQAIRIKH (69 aa)). In terms of domain architecture, CSD 6; degenerate spans 593–673 (FETLVASNIE…KECIAVNVQQ (81 aa)). A disordered region spans residues 721-741 (QNGYVMHGSPGGSTSSVGSNN). A compositionally biased stretch (low complexity) spans 732 to 741 (GSTSSVGSNN). Residues 763 to 831 (VYRGFIAVMK…NCLPAENVRM (69 aa)) enclose the CSD 7 domain. A CSD 8; degenerate domain is found at 846 to 919 (THNGVVARPL…SGRAACVNAV (74 aa)). The region spanning 922-987 (KKRATVDSIK…GKSSACNVLK (66 aa)) is the CSD 9 domain.

It belongs to the UNR family. In terms of assembly, interacts with Sxl; cooperates with Sxl to prevent translation of msl-2 transcripts. Interacts with mle; promoting association between mle and roX2 non-coding RNA. Interacts (via CSD domain 7-9) with pAbp; promoting translation inhibition of msl-2 transcripts.

It localises to the cytoplasm. RNA-binding protein that acts as a regulator of dosage compensation in both males and females. In males, acts as positive regulator of dosage compensation by promoting assembly of the MSL complex, a multiprotein complex that mediates X-chromosome dosage compensation. Promotes MSL complex assembly via association with roX1 and roX2 non-coding RNA components of the MSL complex, facilitating the interaction between non-coding RNAs and mle. In females, acts as an inhibitor of dosage compensation together with Sxl by preventing production of msl-2 protein, an essential component of the MSL complex. Specifically binds to the 3'-UTR of msl-2 transcripts, and cooperates with Sxl to prevent translation initiation of msl-2 transcripts. Mechanistically, Sxl and Unr inhibit translation initiation by preventing ribosome recruitment after pAbp-mediated recruitment of the eIF4F complex. The protein is RNA-binding protein Unr of Drosophila melanogaster (Fruit fly).